A 611-amino-acid chain; its full sequence is 4-hydroxy-3-methylbut-2-en-1-yl diphosphate synthase (flavodoxin) (611 aa).

[4Fe-4S] cluster contacts are provided by cysteine 520, cysteine 523, cysteine 554, and glutamate 561.

The protein belongs to the IspG family. It depends on [4Fe-4S] cluster as a cofactor.

The catalysed reaction is (2E)-4-hydroxy-3-methylbut-2-enyl diphosphate + oxidized [flavodoxin] + H2O + 2 H(+) = 2-C-methyl-D-erythritol 2,4-cyclic diphosphate + reduced [flavodoxin]. Its pathway is isoprenoid biosynthesis; isopentenyl diphosphate biosynthesis via DXP pathway; isopentenyl diphosphate from 1-deoxy-D-xylulose 5-phosphate: step 5/6. Functionally, converts 2C-methyl-D-erythritol 2,4-cyclodiphosphate (ME-2,4cPP) into 1-hydroxy-2-methyl-2-(E)-butenyl 4-diphosphate. The chain is 4-hydroxy-3-methylbut-2-en-1-yl diphosphate synthase (flavodoxin) from Parabacteroides distasonis (strain ATCC 8503 / DSM 20701 / CIP 104284 / JCM 5825 / NCTC 11152).